Here is a 409-residue protein sequence, read N- to C-terminus: NADH-quinone oxidoreductase subunit D (409 aa).

It belongs to the complex I 49 kDa subunit family. As to quaternary structure, NDH-1 is composed of 14 different subunits. Subunits NuoB, C, D, E, F, and G constitute the peripheral sector of the complex.

It is found in the cell inner membrane. It carries out the reaction a quinone + NADH + 5 H(+)(in) = a quinol + NAD(+) + 4 H(+)(out). Functionally, NDH-1 shuttles electrons from NADH, via FMN and iron-sulfur (Fe-S) centers, to quinones in the respiratory chain. The immediate electron acceptor for the enzyme in this species is believed to be ubiquinone. Couples the redox reaction to proton translocation (for every two electrons transferred, four hydrogen ions are translocated across the cytoplasmic membrane), and thus conserves the redox energy in a proton gradient. This chain is NADH-quinone oxidoreductase subunit D, found in Helicobacter acinonychis (strain Sheeba).